A 180-amino-acid polypeptide reads, in one-letter code: MANRLKEKYTNEVIPALTEKFNYTSVMAVPKVEKIVLNMGVGDAVSNAKNLEKAAAELALISGQKPLITKAKKSIAGFRLREGVAIGAKVTLRGERMYEFLDKLVSVSLPRVRDFHGVPTKSFDGRGNYTLGVKEQLIFPEINFDDVDKVRGLDIVIVTTANTDEESRELLKGLGMPFAK.

This sequence belongs to the universal ribosomal protein uL5 family. In terms of assembly, part of the 50S ribosomal subunit; part of the 5S rRNA/L5/L18/L25 subcomplex. Contacts the 5S rRNA and the P site tRNA. Forms a bridge to the 30S subunit in the 70S ribosome.

Functionally, this is one of the proteins that bind and probably mediate the attachment of the 5S RNA into the large ribosomal subunit, where it forms part of the central protuberance. In the 70S ribosome it contacts protein S13 of the 30S subunit (bridge B1b), connecting the 2 subunits; this bridge is implicated in subunit movement. Contacts the P site tRNA; the 5S rRNA and some of its associated proteins might help stabilize positioning of ribosome-bound tRNAs. The chain is Large ribosomal subunit protein uL5 from Streptococcus equi subsp. equi (strain 4047).